The primary structure comprises 267 residues: Small ribosomal subunit protein uS5 (267 aa).

Positions 1–37 (MADEAPARSGFRGGFGSRGGRGGRGRGRGRWARGRGK) are disordered. Positions 11–20 (FRGGFGSRGG) are enriched in gly residues. The segment covering 21-34 (RGGRGRGRGRWARG) has biased composition (basic residues). The residue at position 60 (Ser-60) is a Phosphoserine. The S5 DRBM domain maps to 85–148 (LKDEVLKIMP…ILAKLSVVPV (64 aa)).

The protein belongs to the universal ribosomal protein uS5 family.

In terms of biological role, component of the ribosome, a large ribonucleoprotein complex responsible for the synthesis of proteins in the cell. The small ribosomal subunit (SSU) binds messenger RNAs (mRNAs) and translates the encoded message by selecting cognate aminoacyl-transfer RNA (tRNA) molecules. The large subunit (LSU) contains the ribosomal catalytic site termed the peptidyl transferase center (PTC), which catalyzes the formation of peptide bonds, thereby polymerizing the amino acids delivered by tRNAs into a polypeptide chain. The nascent polypeptides leave the ribosome through a tunnel in the LSU and interact with protein factors that function in enzymatic processing, targeting, and the membrane insertion of nascent chains at the exit of the ribosomal tunnel. Plays a role in the assembly and function of the 40S ribosomal subunit. Mutations in this protein affects the control of translational fidelity. Involved in nucleolar processing of pre-18S ribosomal RNA and ribosome assembly. Has a specific developmental role during oogenesis. The sequence is that of Small ribosomal subunit protein uS5 (RpS2) from Drosophila melanogaster (Fruit fly).